Here is a 130-residue protein sequence, read N- to C-terminus: Fumarate reductase subunit C (130 aa).

A run of 3 helical transmembrane segments spans residues Val-34 to Val-54, Phe-60 to Ala-80, and Ile-109 to Leu-129.

This sequence belongs to the FrdC family. In terms of assembly, part of an enzyme complex containing four subunits: a flavoprotein (FrdA), an iron-sulfur protein (FrdB), and two hydrophobic anchor proteins (FrdC and FrdD).

The protein resides in the cell inner membrane. Functionally, two distinct, membrane-bound, FAD-containing enzymes are responsible for the catalysis of fumarate and succinate interconversion; fumarate reductase is used in anaerobic growth, and succinate dehydrogenase is used in aerobic growth. Anchors the catalytic components of the fumarate reductase complex to the cell inner membrane, binds quinones. The polypeptide is Fumarate reductase subunit C (Serratia proteamaculans (strain 568)).